The primary structure comprises 146 residues: Hemoglobin subunit beta (146 aa).

N-acetylvaline is present on Val1. One can recognise a Globin domain in the interval 2–146 (HLTAEEKSLV…VANALAHKYH (145 aa)). Position 44 is a phosphoserine (Ser44). N6-acetyllysine is present on Lys59. Residue His63 coordinates heme b. Residue Lys82 is modified to N6-acetyllysine. His92 is a binding site for heme b. An S-nitrosocysteine modification is found at Cys93. The residue at position 144 (Lys144) is an N6-acetyllysine.

The protein belongs to the globin family. Heterotetramer of two alpha chains and two beta chains. In terms of tissue distribution, red blood cells.

Its function is as follows. Involved in oxygen transport from the lung to the various peripheral tissues. The polypeptide is Hemoglobin subunit beta (HBB) (Canis latrans (Coyote)).